The sequence spans 427 residues: Histidine--tRNA ligase (427 aa).

The protein belongs to the class-II aminoacyl-tRNA synthetase family. In terms of assembly, homodimer.

The protein localises to the cytoplasm. It catalyses the reaction tRNA(His) + L-histidine + ATP = L-histidyl-tRNA(His) + AMP + diphosphate + H(+). This Lacticaseibacillus casei (strain BL23) (Lactobacillus casei) protein is Histidine--tRNA ligase.